A 386-amino-acid polypeptide reads, in one-letter code: Homoserine O-succinyltransferase (386 aa).

Residues 49–358 (NAILICHALS…DAEQGHDSFL (310 aa)) form the AB hydrolase-1 domain. Serine 156 (nucleophile) is an active-site residue. Residue arginine 226 participates in substrate binding. Active-site residues include aspartate 321 and histidine 354. Aspartate 355 serves as a coordination point for substrate.

The protein belongs to the AB hydrolase superfamily. MetX family. In terms of assembly, homodimer.

Its subcellular location is the cytoplasm. It carries out the reaction L-homoserine + succinyl-CoA = O-succinyl-L-homoserine + CoA. Its pathway is amino-acid biosynthesis; L-methionine biosynthesis via de novo pathway; O-succinyl-L-homoserine from L-homoserine: step 1/1. Its function is as follows. Transfers a succinyl group from succinyl-CoA to L-homoserine, forming succinyl-L-homoserine. The protein is Homoserine O-succinyltransferase of Acinetobacter baumannii (strain AB307-0294).